The sequence spans 119 residues: Small ribosomal subunit protein uS13m (119 aa).

The protein belongs to the universal ribosomal protein uS13 family. Part of the small ribosomal subunit.

The protein localises to the mitochondrion. Functionally, located at the top of the head of the small subunit, it contacts several helices of the small subunit rRNA. The chain is Small ribosomal subunit protein uS13m (RPS13) from Acanthamoeba castellanii (Amoeba).